A 263-amino-acid chain; its full sequence is Undecaprenyl-diphosphatase (263 aa).

7 helical membrane-spanning segments follow: residues 38 to 58 (RSDFFNIVIQAGAILAICLAL), 75 to 95 (RDYVLKIGVAFLVTAVVGLIV), 108 to 128 (PVAWALLIGGVWMLVAEHFAG), 135 to 155 (VVTWKVAIAVGLAQVVAGVFP), 181 to 201 (FVFMVGIPTMFAASGYALLEM), 217 to 237 (VAFIAATLTGFVVVKWLLGYI), and 242 to 262 (FTVFAVYRILLGAALLLWLPA).

Belongs to the UppP family.

It is found in the cell inner membrane. It carries out the reaction di-trans,octa-cis-undecaprenyl diphosphate + H2O = di-trans,octa-cis-undecaprenyl phosphate + phosphate + H(+). In terms of biological role, catalyzes the dephosphorylation of undecaprenyl diphosphate (UPP). Confers resistance to bacitracin. This is Undecaprenyl-diphosphatase from Xanthomonas campestris pv. campestris (strain 8004).